The chain runs to 335 residues: Fructose-1,6-bisphosphatase class 1 (335 aa).

Mg(2+) contacts are provided by Glu-89, Asp-112, Leu-114, and Asp-115. Substrate is bound by residues 115 to 118 (DGSS), Asn-208, Tyr-241, and Lys-271. Glu-277 provides a ligand contact to Mg(2+).

The protein belongs to the FBPase class 1 family. Homotetramer. Mg(2+) is required as a cofactor.

The protein resides in the cytoplasm. The enzyme catalyses beta-D-fructose 1,6-bisphosphate + H2O = beta-D-fructose 6-phosphate + phosphate. It participates in carbohydrate biosynthesis; gluconeogenesis. This Proteus mirabilis (strain HI4320) protein is Fructose-1,6-bisphosphatase class 1.